The chain runs to 181 residues: Small ribosomal subunit protein bS16 (181 aa).

A disordered region spans residues 150-181; it reads KKAAEEAAKAAAEAPAEEAAPAEEAATEAAAE. The segment covering 158–181 has biased composition (low complexity); it reads KAAAEAPAEEAAPAEEAATEAAAE.

The protein belongs to the bacterial ribosomal protein bS16 family.

The polypeptide is Small ribosomal subunit protein bS16 (Bacteroides fragilis (strain ATCC 25285 / DSM 2151 / CCUG 4856 / JCM 11019 / LMG 10263 / NCTC 9343 / Onslow / VPI 2553 / EN-2)).